Here is a 119-residue protein sequence, read N- to C-terminus: Large ribosomal subunit protein uL18 (119 aa).

It belongs to the universal ribosomal protein uL18 family. Part of the 50S ribosomal subunit; part of the 5S rRNA/L5/L18/L25 subcomplex. Contacts the 5S and 23S rRNAs.

Functionally, this is one of the proteins that bind and probably mediate the attachment of the 5S RNA into the large ribosomal subunit, where it forms part of the central protuberance. The chain is Large ribosomal subunit protein uL18 from Ruegeria pomeroyi (strain ATCC 700808 / DSM 15171 / DSS-3) (Silicibacter pomeroyi).